We begin with the raw amino-acid sequence, 492 residues long: Catalase isozyme 2 (492 aa).

Catalysis depends on residues His65 and Asn138. Tyr348 is a heme binding site.

Belongs to the catalase family. Homotetramer. Heme serves as cofactor.

It localises to the peroxisome. It carries out the reaction 2 H2O2 = O2 + 2 H2O. In terms of biological role, occurs in almost all aerobically respiring organisms and serves to protect cells from the toxic effects of hydrogen peroxide. The protein is Catalase isozyme 2 (CAT2) of Nicotiana plumbaginifolia (Leadwort-leaved tobacco).